Here is a 158-residue protein sequence, read N- to C-terminus: MPLLTTGKSFIRALEKSGALGVYVPLEGGFEGRYQRRLRANGYTPYNLTARGLGDLSSYLTGIHGVRPPHLGKKNIGQDAAVGPVYFVPPIATYQLETLPPKSKGLVLWIIEGMILSRAEIEYLTYLPQQEPRLKIVVEMGGERYFRWQPLEQSIQAA.

It belongs to the complex I NdhN subunit family. As to quaternary structure, NDH-1 can be composed of about 15 different subunits; different subcomplexes with different compositions have been identified which probably have different functions.

The protein localises to the cellular thylakoid membrane. It carries out the reaction a plastoquinone + NADH + (n+1) H(+)(in) = a plastoquinol + NAD(+) + n H(+)(out). The enzyme catalyses a plastoquinone + NADPH + (n+1) H(+)(in) = a plastoquinol + NADP(+) + n H(+)(out). Functionally, NDH-1 shuttles electrons from an unknown electron donor, via FMN and iron-sulfur (Fe-S) centers, to quinones in the respiratory and/or the photosynthetic chain. The immediate electron acceptor for the enzyme in this species is believed to be plastoquinone. Couples the redox reaction to proton translocation, and thus conserves the redox energy in a proton gradient. Cyanobacterial NDH-1 also plays a role in inorganic carbon-concentration. This Gloeothece citriformis (strain PCC 7424) (Cyanothece sp. (strain PCC 7424)) protein is NAD(P)H-quinone oxidoreductase subunit N.